Reading from the N-terminus, the 779-residue chain is Ribonucleoside-diphosphate reductase large subunit (779 aa).

Residues S178, 193–194, G222, 420–424, and 614–618 contribute to the substrate site; these read SC, NLCIE, and PTATS. C194 and C440 are disulfide-bonded. N420 serves as the catalytic Proton acceptor. C422 (cysteine radical intermediate) is an active-site residue. Residue E424 is the Proton acceptor of the active site.

This sequence belongs to the ribonucleoside diphosphate reductase large chain family. Heterotetramer composed of a homodimer of the large subunit (R1) and a homodimer of the small subunit (R2). Larger multisubunit protein complex are also active, composed of (R1)n(R2)n.

It carries out the reaction a 2'-deoxyribonucleoside 5'-diphosphate + [thioredoxin]-disulfide + H2O = a ribonucleoside 5'-diphosphate + [thioredoxin]-dithiol. Its activity is regulated as follows. Under complex allosteric control mediated by deoxynucleoside triphosphates and ATP binding. The type of nucleotide bound at the specificity site determines substrate preference. It seems probable that ATP makes the enzyme reduce CDP and UDP, dGTP favors ADP reduction and dTTP favors GDP reduction. Its function is as follows. Ribonucleoside-diphosphate reductase holoenzyme provides the precursors necessary for viral DNA synthesis. Allows virus growth in non-dividing cells. Catalyzes the biosynthesis of deoxyribonucleotides from the corresponding ribonucleotides. The sequence is that of Ribonucleoside-diphosphate reductase large subunit from Ornithodoros (relapsing fever ticks).